Consider the following 265-residue polypeptide: Polyglutamine-binding protein 1 (265 aa).

The WW domain occupies 46–80 (EGLPPSWYKVFDPSCGLPYYWNADTDLVSWLSPHD). The residue at position 94 (serine 94) is a Phosphoserine. Residues 94–265 (SSNADAEEKL…AEASRTKQQD (172 aa)) form a disordered region. A compositionally biased stretch (basic and acidic residues) spans 99-175 (AEEKLDRSHD…DKADREEGKE (77 aa)). Repeat copies occupy residues 104-110 (DRSHDKS), 111-117 (DRGHDKS), 118-124 (DRSHEKP), 125-131 (DRGHDKS), 132-138 (DRGHDKS), 139-140 (DR), 141-142 (DR), 143-144 (ER), 150-151 (DR), 152-153 (ER), 154-155 (ER), 156-157 (DR), 158-159 (ER), 160-161 (DR), and 162-163 (DR). A 5 X 7 AA approximate tandem repeats of D-R-[SG]-H-D-K-S region spans residues 104–138 (DRSHDKSDRGHDKSDRSHEKPDRGHDKSDRGHDKS). The tract at residues 139 to 144 (DRDRER) is 3 X 2 AA tandem repeats of [DE]-R. Positions 150–163 (DRERERDRERDRDR) are 7 X 2 AA tandem repeats of [DE]-R. The segment at 245–255 (YPSPGAVLRAN) is important for interaction with TXNL4A. Residue serine 247 is modified to Phosphoserine.

As to quaternary structure, interacts with POU3F2/Brn-2, ATXN1, TXNL4A, HTT and AR. Interaction with ATXN1 correlates positively with the length of the polyglutamine tract. Interacts with RNA polymerase II large subunit in a phosphorylation-dependent manner. Forms a ternary complex with ATXN1 mutant and phosphorylated RNA polymerase II. Interacts (via C-terminus) with TXNL4A and CD2BP2. Interacts (via WW domain) with ATN1 and SF3B1, and may interact with additional splice factors. Interacts (via WW domain) with WBP11; Leading to reduce interaction between PQBP1 and TXNL4A. Interacts with CAPRIN1. Interacts with DDX1. Interacts with SFPQ. Interacts with KHSRP.

The protein resides in the nucleus. It is found in the nucleus speckle. The protein localises to the cytoplasmic granule. Intrinsically disordered protein that acts as a scaffold, and which is involved in different processes, such as pre-mRNA splicing, transcription regulation, innate immunity and neuron development. Interacts with splicing-related factors via the intrinsically disordered region and regulates alternative splicing of target pre-mRNA species. May suppress the ability of POU3F2 to transactivate the DRD1 gene in a POU3F2 dependent manner. Can activate transcription directly or via association with the transcription machinery. May be involved in ATXN1 mutant-induced cell death. The interaction with ATXN1 mutant reduces levels of phosphorylated RNA polymerase II large subunit. Involved in the assembly of cytoplasmic stress granule, possibly by participating in the transport of neuronal RNA granules. Also acts as an innate immune sensor of infection by retroviruses, by detecting the presence of reverse-transcribed DNA in the cytosol. Directly binds retroviral reverse-transcribed DNA in the cytosol and interacts with CGAS, leading to activate the cGAS-STING signaling pathway, triggering type-I interferon production. The chain is Polyglutamine-binding protein 1 (PQBP1) from Pongo pygmaeus (Bornean orangutan).